The following is a 430-amino-acid chain: MLDPNLLRNEPDAVAEKLARRGFKLDVDKLRALEERRKVLQVNTENLQAERNSRSKSIGQAKARGEDIEPLRLEVNKLGEELDAAKAELDTLLAEIRNIALTIPNLPADEVPVGKDENDNVEVSRWGTPREFDFEIRDHVTLGEMHSGLDFAAAVKLTGSRFVVMKGQIARMHRALSQFMLDLHTEQHGYSENYVPYLVNHDTLYGTGQLPKFAGDLFHTRPLEEEADSSNYALIPTAEVPLTNLVRDEIIDEDQLPIKMTAHTPCFRSEAGSYGRDTRGLIRMHQFDKVEMVQIVRPEDSMAALEEMTGHAEKVLQLLGLPYRKIILCTGDMGFGACKTYDLEVWVPAQNTYREISSCSNVWDFQARRMQARCRSKSDKKTRLVHTLNGSGLAVGRTLVAVMENYQQADGRIEVPEVLRPYMNELEYIG.

237–239 (TAE) is an L-serine binding site. 268 to 270 (RSE) is an ATP binding site. L-serine is bound at residue Glu291. 355 to 358 (EISS) is an ATP binding site. Ser391 serves as a coordination point for L-serine.

The protein belongs to the class-II aminoacyl-tRNA synthetase family. Type-1 seryl-tRNA synthetase subfamily. As to quaternary structure, homodimer. The tRNA molecule binds across the dimer.

The protein localises to the cytoplasm. The enzyme catalyses tRNA(Ser) + L-serine + ATP = L-seryl-tRNA(Ser) + AMP + diphosphate + H(+). The catalysed reaction is tRNA(Sec) + L-serine + ATP = L-seryl-tRNA(Sec) + AMP + diphosphate + H(+). The protein operates within aminoacyl-tRNA biosynthesis; selenocysteinyl-tRNA(Sec) biosynthesis; L-seryl-tRNA(Sec) from L-serine and tRNA(Sec): step 1/1. In terms of biological role, catalyzes the attachment of serine to tRNA(Ser). Is also able to aminoacylate tRNA(Sec) with serine, to form the misacylated tRNA L-seryl-tRNA(Sec), which will be further converted into selenocysteinyl-tRNA(Sec). This chain is Serine--tRNA ligase, found in Salmonella schwarzengrund (strain CVM19633).